A 244-amino-acid chain; its full sequence is 3-deoxy-manno-octulosonate cytidylyltransferase (244 aa).

It belongs to the KdsB family.

Its subcellular location is the cytoplasm. It carries out the reaction 3-deoxy-alpha-D-manno-oct-2-ulosonate + CTP = CMP-3-deoxy-beta-D-manno-octulosonate + diphosphate. It functions in the pathway nucleotide-sugar biosynthesis; CMP-3-deoxy-D-manno-octulosonate biosynthesis; CMP-3-deoxy-D-manno-octulosonate from 3-deoxy-D-manno-octulosonate and CTP: step 1/1. The protein operates within bacterial outer membrane biogenesis; lipopolysaccharide biosynthesis. In terms of biological role, activates KDO (a required 8-carbon sugar) for incorporation into bacterial lipopolysaccharide in Gram-negative bacteria. This is 3-deoxy-manno-octulosonate cytidylyltransferase from Ruthia magnifica subsp. Calyptogena magnifica.